Consider the following 45-residue polypeptide: Photosystem II reaction center protein K (45 aa).

The propeptide occupies 1 to 8 (MEAVFLLA). The helical transmembrane segment at 24–44 (LPVIPVFFLALAFVWQAAVGF) threads the bilayer.

This sequence belongs to the PsbK family. As to quaternary structure, PSII is composed of 1 copy each of membrane proteins PsbA, PsbB, PsbC, PsbD, PsbE, PsbF, PsbH, PsbI, PsbJ, PsbK, PsbL, PsbM, PsbT, PsbX, PsbY, PsbZ, Psb30/Ycf12, peripheral proteins PsbO, CyanoQ (PsbQ), PsbU, PsbV and a large number of cofactors. It forms dimeric complexes.

The protein resides in the cellular thylakoid membrane. One of the components of the core complex of photosystem II (PSII). PSII is a light-driven water:plastoquinone oxidoreductase that uses light energy to abstract electrons from H(2)O, generating O(2) and a proton gradient subsequently used for ATP formation. It consists of a core antenna complex that captures photons, and an electron transfer chain that converts photonic excitation into a charge separation. The polypeptide is Photosystem II reaction center protein K (Crocosphaera subtropica (strain ATCC 51142 / BH68) (Cyanothece sp. (strain ATCC 51142))).